The following is a 173-amino-acid chain: Crossover junction endodeoxyribonuclease RuvC (173 aa).

Active-site residues include Asp8, Glu67, and Asp139. Residues Asp8, Glu67, and Asp139 each contribute to the Mg(2+) site.

Belongs to the RuvC family. Homodimer which binds Holliday junction (HJ) DNA. The HJ becomes 2-fold symmetrical on binding to RuvC with unstacked arms; it has a different conformation from HJ DNA in complex with RuvA. In the full resolvosome a probable DNA-RuvA(4)-RuvB(12)-RuvC(2) complex forms which resolves the HJ. Mg(2+) is required as a cofactor.

It localises to the cytoplasm. The catalysed reaction is Endonucleolytic cleavage at a junction such as a reciprocal single-stranded crossover between two homologous DNA duplexes (Holliday junction).. In terms of biological role, the RuvA-RuvB-RuvC complex processes Holliday junction (HJ) DNA during genetic recombination and DNA repair. Endonuclease that resolves HJ intermediates. Cleaves cruciform DNA by making single-stranded nicks across the HJ at symmetrical positions within the homologous arms, yielding a 5'-phosphate and a 3'-hydroxyl group; requires a central core of homology in the junction. The consensus cleavage sequence is 5'-(A/T)TT(C/G)-3'. Cleavage occurs on the 3'-side of the TT dinucleotide at the point of strand exchange. HJ branch migration catalyzed by RuvA-RuvB allows RuvC to scan DNA until it finds its consensus sequence, where it cleaves and resolves the cruciform DNA. This chain is Crossover junction endodeoxyribonuclease RuvC, found in Aeromonas hydrophila subsp. hydrophila (strain ATCC 7966 / DSM 30187 / BCRC 13018 / CCUG 14551 / JCM 1027 / KCTC 2358 / NCIMB 9240 / NCTC 8049).